A 396-amino-acid polypeptide reads, in one-letter code: Elongation factor Tu (396 aa).

Residues 10–205 (KPHVNIGTIG…AVDESIPDPV (196 aa)) form the tr-type G domain. Positions 19-26 (GHVDHGKT) are G1. 19–26 (GHVDHGKT) contributes to the GTP binding site. Mg(2+) is bound at residue Thr26. The G2 stretch occupies residues 62 to 66 (GITIN). The interval 83–86 (DAPG) is G3. Residues 83 to 87 (DAPGH) and 138 to 141 (NKAD) each bind GTP. The interval 138 to 141 (NKAD) is G4. The tract at residues 175–177 (SAL) is G5.

It belongs to the TRAFAC class translation factor GTPase superfamily. Classic translation factor GTPase family. EF-Tu/EF-1A subfamily. In terms of assembly, monomer.

The protein resides in the cytoplasm. It catalyses the reaction GTP + H2O = GDP + phosphate + H(+). Functionally, GTP hydrolase that promotes the GTP-dependent binding of aminoacyl-tRNA to the A-site of ribosomes during protein biosynthesis. The chain is Elongation factor Tu from Mycolicibacterium gilvum (strain PYR-GCK) (Mycobacterium gilvum (strain PYR-GCK)).